Consider the following 275-residue polypeptide: uncharacterized protein (275 aa).

Residues 20–22, 41–42, 80–81, and Asn107 contribute to the NAD(+) site; these read RAQ and DI. A substrate-binding site is contributed by Ser160. Tyr173 functions as the Proton acceptor in the catalytic mechanism. Residues Lys177 and 206 to 208 contribute to the NAD(+) site; that span reads VDT.

This sequence belongs to the short-chain dehydrogenases/reductases (SDR) family.

This is an uncharacterized protein from Mycobacterium tuberculosis (strain CDC 1551 / Oshkosh).